The following is a 139-amino-acid chain: ATP synthase epsilon chain (139 aa).

This sequence belongs to the ATPase epsilon chain family. As to quaternary structure, F-type ATPases have 2 components, CF(1) - the catalytic core - and CF(0) - the membrane proton channel. CF(1) has five subunits: alpha(3), beta(3), gamma(1), delta(1), epsilon(1). CF(0) has three main subunits: a, b and c.

The protein resides in the cell inner membrane. Its function is as follows. Produces ATP from ADP in the presence of a proton gradient across the membrane. The sequence is that of ATP synthase epsilon chain from Acinetobacter baylyi (strain ATCC 33305 / BD413 / ADP1).